The sequence spans 371 residues: tRNA-specific 2-thiouridylase MnmA (371 aa).

Residues 7–14 (GLSGGVDS) and Met-33 contribute to the ATP site. The interaction with target base in tRNA stretch occupies residues 103–105 (NPD). Catalysis depends on Cys-108, which acts as the Nucleophile. Cys-108 and Cys-201 are oxidised to a cystine. ATP is bound at residue Gly-133. Positions 151-153 (KDQ) are interaction with tRNA. Cys-201 serves as the catalytic Cysteine persulfide intermediate. The segment at 308–309 (RY) is interaction with tRNA.

It belongs to the MnmA/TRMU family.

The protein localises to the cytoplasm. The catalysed reaction is S-sulfanyl-L-cysteinyl-[protein] + uridine(34) in tRNA + AH2 + ATP = 2-thiouridine(34) in tRNA + L-cysteinyl-[protein] + A + AMP + diphosphate + H(+). In terms of biological role, catalyzes the 2-thiolation of uridine at the wobble position (U34) of tRNA, leading to the formation of s(2)U34. The sequence is that of tRNA-specific 2-thiouridylase MnmA from Mycoplasmopsis pulmonis (strain UAB CTIP) (Mycoplasma pulmonis).